The sequence spans 91 residues: DNA-directed RNA polymerase subunit omega (91 aa).

The protein belongs to the RNA polymerase subunit omega family. As to quaternary structure, the RNAP catalytic core consists of 2 alpha, 1 beta, 1 beta' and 1 omega subunit. When a sigma factor is associated with the core the holoenzyme is formed, which can initiate transcription.

The catalysed reaction is RNA(n) + a ribonucleoside 5'-triphosphate = RNA(n+1) + diphosphate. Functionally, promotes RNA polymerase assembly. Latches the N- and C-terminal regions of the beta' subunit thereby facilitating its interaction with the beta and alpha subunits. The polypeptide is DNA-directed RNA polymerase subunit omega (Enterobacter sp. (strain 638)).